Reading from the N-terminus, the 147-residue chain is 2-amino-4-hydroxy-6-hydroxymethyldihydropteridine pyrophosphokinase (147 aa).

The protein belongs to the HPPK family.

It carries out the reaction 6-hydroxymethyl-7,8-dihydropterin + ATP = (7,8-dihydropterin-6-yl)methyl diphosphate + AMP + H(+). The protein operates within cofactor biosynthesis; tetrahydrofolate biosynthesis; 2-amino-4-hydroxy-6-hydroxymethyl-7,8-dihydropteridine diphosphate from 7,8-dihydroneopterin triphosphate: step 4/4. In terms of biological role, catalyzes the transfer of pyrophosphate from adenosine triphosphate (ATP) to 6-hydroxymethyl-7,8-dihydropterin, an enzymatic step in folate biosynthesis pathway. The sequence is that of 2-amino-4-hydroxy-6-hydroxymethyldihydropteridine pyrophosphokinase (folK) from Porphyromonas gingivalis (strain ATCC 33277 / DSM 20709 / CIP 103683 / JCM 12257 / NCTC 11834 / 2561).